The primary structure comprises 428 residues: Large envelope protein (428 aa).

Gly-2 carries N-myristoyl glycine; by host lipidation. Positions 2–145 are pre-S1; it reads GNNIKVTFDP…PPLRDTHPHL (144 aa). A pre-S region spans residues 2–204; the sequence is GNNIKVTFDP…PLTIGDPVLS (203 aa). Topologically, residues 2 to 211 are virion surface; in external conformation; sequence GNNIKVTFDP…VLSTEMSPSG (210 aa). Residues 2-283 are Intravirion; in internal conformation-facing; that stretch reads GNNIKVTFDP…NGFRWMYLRR (282 aa). A glycan (N-linked (GlcNAc...) asparagine) is linked at Asn-3. Positions 110-144 are disordered; it reads RDIPRGIVPPQTPSNRDQRRKPTPLTPPLRDTHPH. The tract at residues 146 to 204 is pre-S2; it reads TMKNQTGHLQGFAEGLRALTTSDHHNSAYGDPFTTLSPVVPTVSTTLSPPLTIGDPVLS. A helical membrane pass occupies residues 212-232; it reads LLGLLAGLQVVYFLWTKILTI. At 233 to 283 the chain is on the intravirion; in external conformation side; the sequence is AQSLDWWWTSLSFPGGIPECTGQNLQFQTCKHLPTSCPPTCNGFRWMYLRR. The helical transmembrane segment at 284–304 threads the bilayer; the sequence is FIIYLLVLLLFLTFLLVLLDW. The Virion surface segment spans residues 305–376; the sequence is KGLLPVCPMM…WALARFSWLS (72 aa). Residue Asn-348 is glycosylated (N-linked (GlcNAc...) asparagine; by host). Residues 377–397 form a helical membrane-spanning segment; the sequence is LLVPLLQWLGGISLTVWLLLI. Topologically, residues 398-403 are intravirion; sequence WMIWFW. Residues 404–426 form a helical membrane-spanning segment; the sequence is GPVLMSILPPFIPIFALFFLIWA. The Virion surface segment spans residues 427 to 428; it reads YI.

It belongs to the orthohepadnavirus major surface antigen family. In terms of assembly, in its internal form (Li-HBsAg), interacts with the capsid protein and with the isoform S. Interacts with host chaperone CANX. Associates with host chaperone CANX through its pre-S2 N glycan; this association may be essential for isoform M proper secretion. As to quaternary structure, interacts with isoform L. Interacts with the antigens of satellite virus HDV (HDVAgs); this interaction is required for encapsidation of HDV genomic RNA. Post-translationally, isoform M is N-terminally acetylated by host at a ratio of 90%, and N-glycosylated by host at the pre-S2 region. Myristoylated.

It localises to the virion membrane. Its function is as follows. The large envelope protein exists in two topological conformations, one which is termed 'external' or Le-HBsAg and the other 'internal' or Li-HBsAg. In its external conformation the protein attaches the virus to cell receptors and thereby initiating infection. This interaction determines the species specificity and liver tropism. This attachment induces virion internalization predominantly through caveolin-mediated endocytosis. The large envelope protein also assures fusion between virion membrane and endosomal membrane. In its internal conformation the protein plays a role in virion morphogenesis and mediates the contact with the nucleocapsid like a matrix protein. The middle envelope protein plays an important role in the budding of the virion. It is involved in the induction of budding in a nucleocapsid independent way. In this process the majority of envelope proteins bud to form subviral lipoprotein particles of 22 nm of diameter that do not contain a nucleocapsid. In Ground squirrel hepatitis virus (strain 27) (GSHV), this protein is Large envelope protein.